A 415-amino-acid polypeptide reads, in one-letter code: Lipoyl synthase, mitochondrial (415 aa).

The N-terminal 32 residues, 1–32, are a transit peptide targeting the mitochondrion; sequence MAASTNRLRFLYSSARTVPQTGSITPISRRTY. Positions 20–32 are enriched in polar residues; sequence QTGSITPISRRTY. The disordered stretch occupies residues 20 to 53; the sequence is QTGSITPISRRTYATTEPSPSATGAPATARKRTN. Positions 33-47 are enriched in low complexity; that stretch reads ATTEPSPSATGAPAT. Residues cysteine 132, cysteine 137, cysteine 143, cysteine 163, cysteine 167, cysteine 170, and serine 378 each coordinate [4Fe-4S] cluster. Positions 146-367 constitute a Radical SAM core domain; that stretch reads GSDKSAATAT…RQRALDMGFL (222 aa). The segment at 395-415 is disordered; it reads AAGTAGESVTDSKAAVDEATR.

This sequence belongs to the radical SAM superfamily. Lipoyl synthase family. Requires [4Fe-4S] cluster as cofactor.

It is found in the mitochondrion. The catalysed reaction is [[Fe-S] cluster scaffold protein carrying a second [4Fe-4S](2+) cluster] + N(6)-octanoyl-L-lysyl-[protein] + 2 oxidized [2Fe-2S]-[ferredoxin] + 2 S-adenosyl-L-methionine + 4 H(+) = [[Fe-S] cluster scaffold protein] + N(6)-[(R)-dihydrolipoyl]-L-lysyl-[protein] + 4 Fe(3+) + 2 hydrogen sulfide + 2 5'-deoxyadenosine + 2 L-methionine + 2 reduced [2Fe-2S]-[ferredoxin]. It participates in protein modification; protein lipoylation via endogenous pathway; protein N(6)-(lipoyl)lysine from octanoyl-[acyl-carrier-protein]: step 2/2. Catalyzes the radical-mediated insertion of two sulfur atoms into the C-6 and C-8 positions of the octanoyl moiety bound to the lipoyl domains of lipoate-dependent enzymes, thereby converting the octanoylated domains into lipoylated derivatives. The protein is Lipoyl synthase, mitochondrial of Aspergillus flavus (strain ATCC 200026 / FGSC A1120 / IAM 13836 / NRRL 3357 / JCM 12722 / SRRC 167).